Reading from the N-terminus, the 194-residue chain is MYKNGFFKNYLSLFLIFLVIACTSKDSSNEYVEEQEAENSSKPDDSKIDEHTIGHVFHAMGVVHSKKDRKSLGKNIKVFYFSEEDGHFQTIPSKENAKLIVYFYDNVYAGEAPISISGKEAFIFVGITPDFKKIINSNLHGAKSDLIGTFKDLNIKNSKLEITVDENNSDAKTFLESVNYIIDGVEKISPMLTN.

Residues 1–21 (MYKNGFFKNYLSLFLIFLVIA) form the signal peptide. Cysteine 22 carries the N-palmitoyl cysteine lipid modification. Residue cysteine 22 is the site of S-diacylglycerol cysteine attachment.

Its subcellular location is the cell outer membrane. This is Outer surface 22 kDa lipoprotein (p22) from Borreliella burgdorferi (strain ZS7) (Borrelia burgdorferi).